The primary structure comprises 452 residues: Phosphoglucosamine mutase (452 aa).

Catalysis depends on Ser112, which acts as the Phosphoserine intermediate. Mg(2+) contacts are provided by Ser112, Asp251, Asp253, and Asp255. Ser112 is modified (phosphoserine).

The protein belongs to the phosphohexose mutase family. Mg(2+) is required as a cofactor. In terms of processing, activated by phosphorylation.

It catalyses the reaction alpha-D-glucosamine 1-phosphate = D-glucosamine 6-phosphate. In terms of biological role, catalyzes the conversion of glucosamine-6-phosphate to glucosamine-1-phosphate. This Bordetella bronchiseptica (strain ATCC BAA-588 / NCTC 13252 / RB50) (Alcaligenes bronchisepticus) protein is Phosphoglucosamine mutase.